The chain runs to 601 residues: Deuterosome assembly protein 1 (601 aa).

3 coiled-coil regions span residues 14–59, 86–196, and 226–277; these read CEAE…NAQT, TQNY…GKKQ, and IEKL…ELQS. The disordered stretch occupies residues 305–329; sequence AQDNRKRVESSYSPSPKEAERKRKE. Residues 354–397 are a coiled coil; sequence EEGLCSEQERLRSEISELTQELHQKEVTIATVMKKAALLERQLK. Phosphoserine is present on S544. Residues 555–586 are a coiled coil; that stretch reads AAQHFLMEEERRAKELEKLLNTHIDELQRHTE.

It belongs to the CEP63 family. In terms of assembly, interacts with CEP152; the interaction is mutually exclusive with CEP63. As to expression, highly enriched in multicilia-abundant tissues (trachea and oviduct).

Its subcellular location is the cytoplasm. Its function is as follows. Key structural component of the deuterosome, a structure that promotes de novo centriole amplification in multiciliated cells. Deuterosome-mediated centriole amplification occurs in terminally differentiated multiciliated cells and can generate more than 100 centrioles. Probably sufficient for the specification and formation of the deuterosome inner core. Interacts with CEP152 and recruits PLK4 to activate centriole biogenesis. In Mus musculus (Mouse), this protein is Deuterosome assembly protein 1.